The sequence spans 115 residues: Promotilin (115 aa).

The signal sequence occupies residues 1 to 25 (MLSRKATAILLVVHAAAMLASQTEG). Residues 43-73 (RYKGQKKSLSVQQRSEEVGPVDPAEPREEKQ) form a disordered region.

The protein belongs to the motilin family.

The protein localises to the secreted. Plays an important role in the regulation of interdigestive gastrointestinal motility and indirectly causes rhythmic contraction of duodenal and colonic smooth muscle. In Ovis aries (Sheep), this protein is Promotilin (MLN).